Reading from the N-terminus, the 1433-residue chain is CAP-Gly domain-containing linker protein 1 (1433 aa).

Residues 1-51 (MSMLKPSGLKAPSKTIKHGSTLLKAPASVATAPAEKAPSSEKSSSTTTADA) are disordered. Over residues 32–49 (APAEKAPSSEKSSSTTTA) the composition is skewed to low complexity. Residues 79–121 (GETQFAPGQWAGIVLDEPIGKNDGSVAGVRYFQCEPLRGIFTR) form the CAP-Gly 1 domain. The disordered stretch occupies residues 133 to 208 (DEANGTQTAH…VSNLSEAGSL (76 aa)). Residues 140 to 168 (TAHASRATSPTSTSTASAVSASPAALLPS) show a composition bias toward low complexity. Residues 184-204 (TPSQFSNLSKTASGSVSNLSE) show a composition bias toward polar residues. The region spanning 235-277 (GETDFAKGEWCGVELDEPLGKNDGAVAGTRYFQCQPRYGLFAP) is the CAP-Gly 2 domain. A compositionally biased stretch (low complexity) spans 319-333 (SLSSVASSVSSKPSR). A disordered region spans residues 319-338 (SLSSVASSVSSKPSRTGLLT). Residues 351–1353 (TTALQEALKE…CEAALNGNEE (1003 aa)) are a coiled coil. The segment at 1412 to 1429 (PYCDTCEMFGHWTADCND) adopts a CCHC-type zinc-finger fold.

The protein resides in the cytoplasm. The protein localises to the cytoskeleton. Its subcellular location is the cytoplasmic vesicle membrane. It localises to the cell projection. It is found in the ruffle. Binds to the plus end of microtubules and regulates the dynamics of the microtubule cytoskeleton. Promotes microtubule growth and microtubule bundling. Links cytoplasmic vesicles to microtubules and thereby plays an important role in intracellular vesicle trafficking. Plays a role macropinocytosis and endosome trafficking. This is CAP-Gly domain-containing linker protein 1 (CLIP1) from Gallus gallus (Chicken).